The following is a 378-amino-acid chain: Metalloendoproteinase 2-MMP (378 aa).

Positions 1 to 20 (MRFCVFGFLSLFLIVSPASA) are cleaved as a signal peptide. Residues 21–154 (WFFPNSTAVP…SRTHLHAVKR (134 aa)) constitute a propeptide, activation peptide. 5 N-linked (GlcNAc...) asparagine glycosylation sites follow: N25, N35, N46, N79, and N102. The Cysteine switch motif lies at 118-125 (PRCGNPDV). C120 is a binding site for Zn(2+). N-linked (GlcNAc...) asparagine glycans are attached at residues N127, N143, and N203. H280 provides a ligand contact to Zn(2+). Residue E281 is part of the active site. The Zn(2+) site is built by H284 and H290. N-linked (GlcNAc...) asparagine glycosylation is present at N330. S349 is lipidated: GPI-anchor amidated serine. The propeptide at 350–378 (AAWRIDGSSRSTIVSLLLSTVGLVLWFLP) is removed in mature form.

The protein belongs to the peptidase M10A family. Matrix metalloproteinases (MMPs) subfamily. The cofactor is Zn(2+). Mostly expressed in roots, and, to a lower extent, in flowers, leaves and stems.

The protein localises to the cell membrane. Repressed by acetohydroxamic acid (AHA). Matrix metalloproteinases (MMPs) or matrixins may play a role in the degradation and remodeling of the extracellular matrix (ECM) during development or in response to stresses. Required for plant growth, morphogenesis, and development with particular relevance for flowering and senescence. Active on McaPLGLDpaAR-NH(2) (QF24) and myelin basic protein (MBP) and, to some extent, on beta-casein. The protein is Metalloendoproteinase 2-MMP of Arabidopsis thaliana (Mouse-ear cress).